The chain runs to 32 residues: Ranatuerin-3 (32 aa).

A disulfide bridge connects residues Cys-23 and Cys-28.

The protein belongs to the frog skin active peptide (FSAP) family. Ranatuerin subfamily. As to expression, expressed by the skin glands.

The protein localises to the secreted. Functionally, antibacterial activity against Gram-positive bacterium S.aureus (MIC=60 uM). Shows no detectable hemolytic activity towards human erythrocytes. The protein is Ranatuerin-3 of Aquarana catesbeiana (American bullfrog).